A 470-amino-acid polypeptide reads, in one-letter code: Desmin (470 aa).

Residues 2–108 (SQAYSSSQRV…QEFLTTRTNE (107 aa)) are head. Serine 7 is subject to Phosphoserine; by CDK1. Residue serine 12 is modified to Phosphoserine; by AURKB. Position 16 is an omega-N-methylarginine (arginine 16). Threonine 17 is subject to Phosphothreonine; by AURKB and ROCK1. Serine 28 carries the post-translational modification Phosphoserine; by CDK1. A Phosphoserine modification is found at serine 31. Serine 32 is subject to Phosphoserine; by CDK1. The residue at position 37 (arginine 37) is an Asymmetric dimethylarginine; alternate. The residue at position 37 (arginine 37) is an Omega-N-methylarginine; alternate. Phosphoserine is present on serine 45. An ADP-ribosylarginine modification is found at arginine 58. Position 60 is a phosphoserine; by AURKB (serine 60). Phosphoserine is present on serine 68. Arginine 70 is modified (omega-N-methylarginine). Threonine 76 and threonine 77 each carry phosphothreonine; by ROCK1. Serine 81 carries the post-translational modification Phosphoserine. In terms of domain architecture, IF rod spans 108–416 (EKVELQELND…KLLEGEESRI (309 aa)). A coil 1A region spans residues 109-141 (KVELQELNDRFANYIEKVRFLEQQNAALAAEVN). Residues 142–151 (RLKGREPTRV) form a linker 1 region. Residues 152–252 (AELYEEELRE…HEEEIRELQA (101 aa)) are coil 1B. A linker 12 region spans residues 253 to 268 (QLQEQQVQVEMDMSKP). The segment at 268–415 (PDLTAALRDI…RKLLEGEESR (148 aa)) is interaction with NEB. The segment at 269-287 (DLTAALRDIRAQYETIAAK) is coil 2A. The segment at 288 to 295 (NISEAEEW) is linker 2. Serine 290, serine 358, serine 361, and serine 424 each carry phosphoserine. The segment at 296-412 (YKSKVSDLTQ…ATYRKLLEGE (117 aa)) is coil 2B. A tail region spans residues 413 to 470 (ESRINLPIQTYSALNFRETSPEQRGSEVHTKKTVMIKTIETRDGEVVSEATQQQHEVL). Residues 438-453 (SEVHTKKTVMIKTIET) form an interaction with CRYAB region.

It belongs to the intermediate filament family. Homomer. Interacts with DST. Interacts with MTM1. Interacts with EPPK1; interaction is dependent of higher-order structure of intermediate filament. Interacts with CRYAB. Interacts with NEB (via nebulin repeats 160-164). Interacts (via rod region) with NEBL (via nebulin repeats 1-5). Interacts with ASB2 isoform 1; the interaction targets DES for proteasomal degradation. Interacts with PLEC isoform 1C. Interacts with PKP1. Interacts with FLII. In terms of processing, ADP-ribosylation prevents ability to form intermediate filaments. Phosphorylation at Ser-7, Ser-28 and Ser-32 by CDK1, phosphorylation at Ser-60 by AURKB and phosphorylation at Thr-76 by ROCK1 contribute to efficient separation of desmin intermediate filaments during mitosis. Post-translationally, ubiquitination by a SCF-like complex containing ASB2 isoform 1 leads to proteasomal degradation.

The protein resides in the cytoplasm. The protein localises to the myofibril. Its subcellular location is the sarcomere. It localises to the z line. It is found in the cell membrane. The protein resides in the sarcolemma. The protein localises to the nucleus. Its subcellular location is the cell tip. It localises to the nucleus envelope. Functionally, muscle-specific type III intermediate filament essential for proper muscular structure and function. Plays a crucial role in maintaining the structure of sarcomeres, inter-connecting the Z-disks and forming the myofibrils, linking them not only to the sarcolemmal cytoskeleton, but also to the nucleus and mitochondria, thus providing strength for the muscle fiber during activity. In adult striated muscle they form a fibrous network connecting myofibrils to each other and to the plasma membrane from the periphery of the Z-line structures. May act as a sarcomeric microtubule-anchoring protein: specifically associates with detyrosinated tubulin-alpha chains, leading to buckled microtubules and mechanical resistance to contraction. Required for nuclear membrane integrity, via anchoring at the cell tip and nuclear envelope, resulting in maintenance of microtubule-derived intracellular mechanical forces. Contributes to the transcriptional regulation of the NKX2-5 gene in cardiac progenitor cells during a short period of cardiomyogenesis and in cardiac side population stem cells in the adult. Plays a role in maintaining an optimal conformation of nebulette (NEB) on heart muscle sarcomeres to bind and recruit cardiac alpha-actin. This Homo sapiens (Human) protein is Desmin (DES).